A 561-amino-acid polypeptide reads, in one-letter code: Melanopsin-A (561 aa).

The Extracellular segment spans residues 1-34 (MRPSTDTMEADTAATHRNFITKVDVPDHAHYTVA). Residues 35–55 (FFVSVIGTLGVTGNALVQFAF) traverse the membrane as a helical segment. Residues 56-68 (YSNKKLRNLPNYF) lie on the Cytoplasmic side of the membrane. A helical membrane pass occupies residues 69 to 89 (IMNQAASDFLMAFTQSPFFFI). At 90-104 (NCLNREWIFGELGCK) the chain is on the extracellular side. C103 and C181 are oxidised to a cystine. A helical membrane pass occupies residues 105–125 (LYAFLGALFGITSMINLLAIS). Topologically, residues 126-148 (LDRYMVITRPLEAMKWNSKRRTT) are cytoplasmic. The helical transmembrane segment at 149–169 (IAILLVWLYSLAWSLAPLVGW) threads the bilayer. At 170 to 201 (SSYIPEGLRTSCTWDYVTYTASNRSYTMMLCC) the chain is on the extracellular side. A glycan (N-linked (GlcNAc...) asparagine) is linked at N192. Residues 202–222 (FVFFIPLAIISYCYLFMFLAI) form a helical membrane-spanning segment. The Cytoplasmic segment spans residues 223–255 (RKTSRDVERLGIQVRKSTIIRQKSIRTEWKLAK). A helical transmembrane segment spans residues 256-276 (IAFVVIVVYVLSWSPYACVTM). Residues 277–291 (ISWSGHANILSPYSK) lie on the Extracellular side of the membrane. A helical membrane pass occupies residues 292 to 312 (TVPAVIAKASTIYNPFIYAII). An N6-(retinylidene)lysine modification is found at K299. Residues 313–561 (HQKYRKTLAD…EDSLEDNDVV (249 aa)) are Cytoplasmic-facing. Disordered stretches follow at residues 359-385 (AIRR…SYSS), 404-448 (ASFR…SATH), 479-503 (NGLS…SKSA), and 539-561 (SFTD…NDVV). Residues 371–385 (ASASKTAAGASSYSS) show a composition bias toward low complexity. The span at 550–561 (VDEDSLEDNDVV) shows a compositional bias: acidic residues.

This sequence belongs to the G-protein coupled receptor 1 family. Opsin subfamily. Expressed in retina and brain. Expressed in a subset of retinal horizontal cells as well as a small number of amacrine and retinal ganglion cells. Also expressed in a small population of neurons in the suprachiasmatic nucleus (SNC).

The protein resides in the cell membrane. Its function is as follows. Photoreceptor implicated in non-image-forming responses to light. This is Melanopsin-A (opn4a) from Gadus morhua (Atlantic cod).